We begin with the raw amino-acid sequence, 197 residues long: dTTP/UTP pyrophosphatase (197 aa).

Residue Asp70 is the Proton acceptor of the active site.

It belongs to the Maf family. YhdE subfamily. It depends on a divalent metal cation as a cofactor.

The protein localises to the cytoplasm. The enzyme catalyses dTTP + H2O = dTMP + diphosphate + H(+). It catalyses the reaction UTP + H2O = UMP + diphosphate + H(+). Nucleoside triphosphate pyrophosphatase that hydrolyzes dTTP and UTP. May have a dual role in cell division arrest and in preventing the incorporation of modified nucleotides into cellular nucleic acids. In Salmonella choleraesuis (strain SC-B67), this protein is dTTP/UTP pyrophosphatase (yceF2).